The following is a 795-amino-acid chain: Phenylalanine--tRNA ligase beta subunit (795 aa).

The tRNA-binding domain maps to 39 to 148; that stretch reads AGEFTGVKVG…EGTTLGADVR (110 aa). One can recognise a B5 domain in the interval 401-476; sequence PKANTVELRR…RIYGYNNIPN (76 aa). Residues D454, D460, E463, and E464 each contribute to the Mg(2+) site. The region spanning 701–794 is the FDX-ACB domain; the sequence is SKFPANRRDI…IGEKFSATLR (94 aa).

It belongs to the phenylalanyl-tRNA synthetase beta subunit family. Type 1 subfamily. Tetramer of two alpha and two beta subunits. Requires Mg(2+) as cofactor.

Its subcellular location is the cytoplasm. The enzyme catalyses tRNA(Phe) + L-phenylalanine + ATP = L-phenylalanyl-tRNA(Phe) + AMP + diphosphate + H(+). In Aliivibrio fischeri (strain ATCC 700601 / ES114) (Vibrio fischeri), this protein is Phenylalanine--tRNA ligase beta subunit.